A 585-amino-acid polypeptide reads, in one-letter code: Proline--tRNA ligase (585 aa).

Belongs to the class-II aminoacyl-tRNA synthetase family. ProS type 1 subfamily. In terms of assembly, homodimer.

It localises to the cytoplasm. The enzyme catalyses tRNA(Pro) + L-proline + ATP = L-prolyl-tRNA(Pro) + AMP + diphosphate. Catalyzes the attachment of proline to tRNA(Pro) in a two-step reaction: proline is first activated by ATP to form Pro-AMP and then transferred to the acceptor end of tRNA(Pro). As ProRS can inadvertently accommodate and process non-cognate amino acids such as alanine and cysteine, to avoid such errors it has two additional distinct editing activities against alanine. One activity is designated as 'pretransfer' editing and involves the tRNA(Pro)-independent hydrolysis of activated Ala-AMP. The other activity is designated 'posttransfer' editing and involves deacylation of mischarged Ala-tRNA(Pro). The misacylated Cys-tRNA(Pro) is not edited by ProRS. The polypeptide is Proline--tRNA ligase (Corynebacterium diphtheriae (strain ATCC 700971 / NCTC 13129 / Biotype gravis)).